A 198-amino-acid polypeptide reads, in one-letter code: NAD(P)H quinone oxidoreductase PST1 (198 aa).

Residues V6 to F192 enclose the Flavodoxin-like domain. Residues S12–H16 and V112–G164 contribute to the FMN site.

This sequence belongs to the WrbA family. FMN is required as a cofactor.

Its subcellular location is the cell membrane. It carries out the reaction a quinone + NADH + H(+) = a quinol + NAD(+). The catalysed reaction is a quinone + NADPH + H(+) = a quinol + NADP(+). Functionally, flavodoxin-like protein (FLP) that plays a role in cell wall integrity, oxidative stress protection and virulence. FLPs act as NAD(P)H quinone oxidoreductases. Reduces ubiquinone (coenzyme Q), enabling it to serve as an antioxidant in the membrane. The polypeptide is NAD(P)H quinone oxidoreductase PST1 (Candida albicans (strain SC5314 / ATCC MYA-2876) (Yeast)).